The sequence spans 800 residues: Elongation factor G, mitochondrial (800 aa).

The transit peptide at 1–34 (MSVHTVMRTQVRSLAGMPKAAMRPLGNSFCARRY) directs the protein to the mitochondrion. A tr-type G domain is found at 99–385 (SKVRNIGIAA…GICDYLPNPA (287 aa)). Residues 108–115 (AHIDSGKT), 183–187 (DTPGH), and 237–240 (NKMD) contribute to the GTP site.

Belongs to the TRAFAC class translation factor GTPase superfamily. Classic translation factor GTPase family. EF-G/EF-2 subfamily.

The protein resides in the mitochondrion. It participates in protein biosynthesis; polypeptide chain elongation. Its function is as follows. Mitochondrial GTPase that catalyzes the GTP-dependent ribosomal translocation step during translation elongation. During this step, the ribosome changes from the pre-translocational (PRE) to the post-translocational (POST) state as the newly formed A-site-bound peptidyl-tRNA and P-site-bound deacylated tRNA move to the P and E sites, respectively. Catalyzes the coordinated movement of the two tRNA molecules, the mRNA and conformational changes in the ribosome. The chain is Elongation factor G, mitochondrial from Coccidioides immitis (strain RS) (Valley fever fungus).